Reading from the N-terminus, the 1043-residue chain is Sucrose-phosphate synthase 1 (1043 aa).

The segment covering 95–117 (EEKEAQRLAKRRLEREKGRREAT) has biased composition (basic and acidic residues). Residues 95–127 (EEKEAQRLAKRRLEREKGRREATADMSEEFSEG) are disordered. A phosphoserine mark is found at Ser-121, Ser-125, Ser-152, and Ser-155. The disordered stretch occupies residues 670 to 693 (PRHPQWQSDDGGDNSEPESPSDSL).

Belongs to the glycosyltransferase 1 family. Homodimer or homotetramer. Post-translationally, phosphorylated at Ser-152 upon sucrose supply. As to expression, expressed in seeds, stems, rosette leaves, flowers and siliques. Highly expressed in maturing nectaries.

It catalyses the reaction beta-D-fructose 6-phosphate + UDP-alpha-D-glucose = sucrose 6(F)-phosphate + UDP + H(+). It functions in the pathway glycan biosynthesis; sucrose biosynthesis; sucrose from D-fructose 6-phosphate and UDP-alpha-D-glucose: step 1/2. With respect to regulation, activity is regulated by phosphorylation and moderated by concentration of metabolites and light. Its function is as follows. Plays a major role in photosynthetic sucrose synthesis by catalyzing the rate-limiting step of sucrose biosynthesis from UDP-glucose and fructose- 6-phosphate. Involved in the regulation of carbon partitioning in the leaves of plants. May regulate the synthesis of sucrose and therefore play a major role as a limiting factor in the export of photoassimilates out of the leaf. Plays a role for sucrose availability that is essential for plant growth and fiber elongation. Required for nectar secretion. In Arabidopsis thaliana (Mouse-ear cress), this protein is Sucrose-phosphate synthase 1 (SPS1).